The chain runs to 150 residues: MEVLIVNESKHAAPRKFIQTWMQLVVTELKRKKVLKAEQARRELTLVFLDKKPAQKINMEFRGKNYATDVLSFDSMDPGSLGELVLCPEVLKRQSKEHGLTYQQELGYMLLHGVLHLLGYDHETSEAEALEMFGIQDAAFEVLLKKVSAK.

Positions 112, 116, and 122 each coordinate Zn(2+).

Belongs to the endoribonuclease YbeY family. Zn(2+) serves as cofactor.

It localises to the cytoplasm. Its function is as follows. Single strand-specific metallo-endoribonuclease involved in late-stage 70S ribosome quality control and in maturation of the 3' terminus of the 16S rRNA. In Bdellovibrio bacteriovorus (strain ATCC 15356 / DSM 50701 / NCIMB 9529 / HD100), this protein is Endoribonuclease YbeY.